Reading from the N-terminus, the 161-residue chain is Nucleotide-binding protein Pput_4372 (161 aa).

This sequence belongs to the YajQ family.

In terms of biological role, nucleotide-binding protein. The chain is Nucleotide-binding protein Pput_4372 from Pseudomonas putida (strain ATCC 700007 / DSM 6899 / JCM 31910 / BCRC 17059 / LMG 24140 / F1).